The sequence spans 287 residues: Histone H1 (287 aa).

Residues Met-1–Glu-11 are compositionally biased toward low complexity. 2 disordered regions span residues Met-1–Pro-58 and Tyr-120–Lys-287. Residues Gly-33–Ser-51 show a composition bias toward basic residues. The region spanning Thr-55–Ser-124 is the H15 domain. The segment covering Ala-135–Pro-202 has biased composition (basic residues). Residues Lys-203–Thr-248 are compositionally biased toward low complexity. Over residues Pro-276–Lys-287 the composition is skewed to basic residues.

It belongs to the histone H1/H5 family.

Its subcellular location is the nucleus. The protein resides in the chromosome. Functionally, histones H1 are necessary for the condensation of nucleosome chains into higher-order structures. This is Histone H1 from Solanum lycopersicum (Tomato).